A 957-amino-acid chain; its full sequence is ADAMTS-like protein 2 (957 aa).

The N-terminal stretch at 1–29 (MDGRRQHPHWAWSLLAVAVVAGGAAPTEA) is a signal peptide. A TSP type-1 1 domain is found at 47–106 (AYWWGEWTKWTACSRSCGGGVTSQERHCLQQRRKSVPGTGNRTCVGTSKRYQLCRVQECP). Disulfide bonds link C59/C100, C63/C105, and C74/C90. N-linked (GlcNAc...) asparagine glycans are attached at residues N87, N374, N435, N482, N518, N530, N539, and N550. The span at 532 to 544 (SSEAPFPNTSASP) shows a compositional bias: polar residues. The interval 532-568 (SSEAPFPNTSASPPNLAGNRTHKARTRPKARKQGVSP) is disordered. The span at 551 to 563 (RTHKARTRPKARK) shows a compositional bias: basic residues. 6 TSP type-1 domains span residues 570–624 (DMYR…EFCA), 628–692 (CQPR…PACG), 694–742 (QWEM…TGPP), 743–801 (CDRQ…KNCP), 803–857 (HWLA…TCFE), and 859–914 (PCFK…QPCP). Residue N737 is glycosylated (N-linked (GlcNAc...) asparagine). Residue N813 is glycosylated (N-linked (GlcNAc...) asparagine). The region spanning 918 to 956 (PDDSCQDQPGTNCALAIKVNLCGHWYYSKACCRSCRPPH) is the PLAC domain.

As to quaternary structure, interacts with LTBP1. Glycosylated. Can be O-fucosylated by POFUT2 on a serine or a threonine residue found within the consensus sequence C1-X(2)-(S/T)-C2-G of the TSP type-1 repeat domains where C1 and C2 are the first and second cysteine residue of the repeat, respectively. Fucosylated repeats can then be further glycosylated by the addition of a beta-1,3-glucose residue by the glucosyltransferase, B3GALTL. Fucosylation mediates the efficient secretion of ADAMTS family members. Can also be C-glycosylated with one or two mannose molecules on tryptophan residues within the consensus sequence W-X-X-W of the TPRs, and N-glycosylated. These other glycosylations can also facilitate secretion.

The protein localises to the secreted. This Mus musculus (Mouse) protein is ADAMTS-like protein 2 (Adamtsl2).